Reading from the N-terminus, the 238-residue chain is Orotidine 5'-phosphate decarboxylase (238 aa).

Substrate is bound by residues D18, K40, 67-76 (DMKLLDIDNT), T122, R183, Q192, and R213. K69 functions as the Proton donor in the catalytic mechanism.

It belongs to the OMP decarboxylase family. Type 1 subfamily. In terms of assembly, homodimer.

It carries out the reaction orotidine 5'-phosphate + H(+) = UMP + CO2. The protein operates within pyrimidine metabolism; UMP biosynthesis via de novo pathway; UMP from orotate: step 2/2. Catalyzes the decarboxylation of orotidine 5'-monophosphate (OMP) to uridine 5'-monophosphate (UMP). This chain is Orotidine 5'-phosphate decarboxylase, found in Brucella canis (strain ATCC 23365 / NCTC 10854 / RM-666).